The sequence spans 427 residues: Mitogen-activated protein kinase 8B (427 aa).

Residues Y26 to I321 form the Protein kinase domain. ATP is bound by residues G33 to V40 and K55. Residue D151 is the Proton acceptor of the active site. T183 bears the Phosphothreonine mark. The TXY signature appears at T183–Y185. At Y185 the chain carries Phosphotyrosine. Residues I372–R427 form a disordered region. The span at S387–S403 shows a compositional bias: low complexity. Positions T404–E417 are enriched in polar residues.

It belongs to the protein kinase superfamily. CMGC Ser/Thr protein kinase family. MAP kinase subfamily. Mg(2+) is required as a cofactor. In terms of processing, dually phosphorylated on Thr-183 and Tyr-185, which activates the enzyme. As to expression, expressed at high levels in the ovary and at lower levels in brain, gill, heart, spleen, liver, kidney, muscle, bladder and gut.

It carries out the reaction L-seryl-[protein] + ATP = O-phospho-L-seryl-[protein] + ADP + H(+). The enzyme catalyses L-threonyl-[protein] + ATP = O-phospho-L-threonyl-[protein] + ADP + H(+). Activated by threonine and tyrosine phosphorylation. Responds to activation by environmental stress and pro-inflammatory cytokines by phosphorylating a number of transcription factors, primarily components of AP-1 such as c-Jun and ATF2 and thus regulates AP-1 transcriptional activity. May play a role in the regulation of the circadian clock. This chain is Mitogen-activated protein kinase 8B (mapk8b), found in Cyprinus carpio (Common carp).